A 119-amino-acid polypeptide reads, in one-letter code: Large ribosomal subunit protein bL19 (119 aa).

Belongs to the bacterial ribosomal protein bL19 family.

In terms of biological role, this protein is located at the 30S-50S ribosomal subunit interface and may play a role in the structure and function of the aminoacyl-tRNA binding site. This chain is Large ribosomal subunit protein bL19, found in Sulfurovum sp. (strain NBC37-1).